Here is a 482-residue protein sequence, read N- to C-terminus: Argininosuccinate synthase (482 aa).

Residues 17 to 25 (AFSGGLDTS) and alanine 43 each bind ATP. Tyrosine 99 lines the L-citrulline pocket. Glycine 129 and threonine 131 together coordinate ATP. Positions 131, 135, and 136 each coordinate L-aspartate. Asparagine 135 serves as a coordination point for L-citrulline. An ATP-binding site is contributed by aspartate 136. L-citrulline contacts are provided by arginine 139 and serine 192. Aspartate 194 contributes to the ATP binding site. Residues threonine 201, glutamate 203, and glutamate 280 each contribute to the L-citrulline site. The tract at residues 461–482 (SRGEATDEETMLDRAAMESGTD) is disordered.

The protein belongs to the argininosuccinate synthase family. Type 2 subfamily. In terms of assembly, homotetramer.

It is found in the cytoplasm. It catalyses the reaction L-citrulline + L-aspartate + ATP = 2-(N(omega)-L-arginino)succinate + AMP + diphosphate + H(+). It functions in the pathway amino-acid biosynthesis; L-arginine biosynthesis; L-arginine from L-ornithine and carbamoyl phosphate: step 2/3. This chain is Argininosuccinate synthase (argG), found in Streptomyces lavendulae.